A 304-amino-acid chain; its full sequence is Recombination-associated protein RdgC (304 aa).

This sequence belongs to the RdgC family.

It is found in the cytoplasm. It localises to the nucleoid. Functionally, may be involved in recombination. This Shewanella oneidensis (strain ATCC 700550 / JCM 31522 / CIP 106686 / LMG 19005 / NCIMB 14063 / MR-1) protein is Recombination-associated protein RdgC.